The chain runs to 308 residues: RNA pseudouridylate synthase domain-containing protein 1 (308 aa).

At Met-1 the chain carries N-acetylmethionine. The active site involves Asp-67. The disordered stretch occupies residues 257-292 (APDPDPSEGGPGPCSPCTPLPGPGRPPPPPETEVQR). A compositionally biased stretch (pro residues) spans 269–287 (PCSPCTPLPGPGRPPPPPE).

This sequence belongs to the pseudouridine synthase RluA family.

The sequence is that of RNA pseudouridylate synthase domain-containing protein 1 (RPUSD1) from Bos taurus (Bovine).